A 518-amino-acid polypeptide reads, in one-letter code: Gypsy retrotransposon integrase-like protein 1 (518 aa).

The region spanning 135–293 (VVGNPWSVVT…PYFQMFNRNP (159 aa)) is the Integrase catalytic domain. The disordered stretch occupies residues 326–348 (NQTPAAGQMESSTSEELSKSKVA). Phosphoserine is present on Ser-498.

The sequence is that of Gypsy retrotransposon integrase-like protein 1 (GIN1) from Rattus norvegicus (Rat).